We begin with the raw amino-acid sequence, 886 residues long: Vam6/Vps39-like protein (886 aa).

One can recognise a CNH domain in the interval 15–294 (PLQIDCLAAW…RFITSGGSNI (280 aa)). A CHCR repeat occupies 573 to 750 (FTEDLPEVES…LLRMYLSPPS (178 aa)).

Belongs to the VAM6/VPS39 family. In terms of assembly, homooligomer. Interacts with TGFBR2 and, less efficiently, with TGFBR1; interaction with TGFBR2 is independent of the receptor kinase activity and of the presence of TGF-beta. Also interacts with ACVR2B, but not with BMPR2. Interacts with SMAD4, preferentially following TGF-beta treatment. Component of the putative homotypic fusion and vacuole protein sorting (HOPS) complex; the core of which composed of the class C Vps proteins VPS11, VPS16, VPS18 and VPS33A, is associated with VPS39 and VPS41. Interacts with PLEKHM2; involved in VPS39 recruitment to ARL8B-containing lysosomes. Associates with adapter protein complex 3 (AP-3) and clathrin:AP-3 complexes. Interacts with STX17; this interaction is increased in the absence of TMEM39A. Interacts with RAB7, RAB2A and RAB2B. Interacts with RAB2A (GTP-bound); the interaction contributes to obtaining a functional HOPS complex that promotes autophagosome-lysosome membrane fusion driven by STX17-SNAP29-VAMP8. Interacts with RAB39A (GTP-bound) and RAB39B (GTP-bound); interaction with RAB39A contributes to obtaining a functional HOPS complex.

It is found in the cytoplasm. Its subcellular location is the lysosome membrane. The protein resides in the late endosome membrane. Regulator of TGF-beta/activin signaling, inhibiting SMAD3- and activating SMAD2-dependent transcription. Acts by interfering with SMAD3/SMAD4 complex formation, this would lead to inhibition of SMAD3-dependent transcription and relieve SMAD3 inhibition of SMAD2-dependent promoters, thus increasing SMAD2-dependent transcription. Functionally, plays a role in vesicle-mediated protein trafficking to lysosomal compartments including the endocytic membrane transport and autophagic pathways. Acts as a component of the HOPS endosomal tethering complex which is proposed to be involved in the Rab5-to-Rab7 endosome conversion probably implicating MON1A/B, and via binding SNAREs and SNARE complexes to mediate tethering and docking events during SNARE-mediated membrane fusion. The HOPS complex is proposed to be recruited to Rab7 on the late endosomal membrane and to regulate late endocytic, phagocytic and autophagic traffic towards lysosomes. Involved in homotypic vesicle fusions between late endosomes and in heterotypic fusions between late endosomes and lysosomes. Required for fusion of endosomes and autophagosomes with lysosomes. This Mus musculus (Mouse) protein is Vam6/Vps39-like protein.